Reading from the N-terminus, the 307-residue chain is Ubiquitin recognition factor in ER-associated degradation protein 1 (307 aa).

Met1 bears the N-acetylmethionine mark. Ser129, Ser231, Ser245, Ser247, and Ser299 each carry phosphoserine. Disordered regions lie at residues 230-255 (GSGN…GDIK) and 282-307 (EEDE…GRKP).

The protein belongs to the UFD1 family. As to quaternary structure, interacts with USP13. Heterodimer with NPLOC4, this heterodimer binds VCP and inhibits Golgi membrane fusion. Interacts with ZFAND2B; probably through VCP.

It localises to the nucleus. The protein localises to the cytoplasm. It is found in the cytosol. It participates in protein degradation; proteasomal ubiquitin-dependent pathway. Functionally, essential component of the ubiquitin-dependent proteolytic pathway which degrades ubiquitin fusion proteins. The ternary complex containing UFD1, VCP and NPLOC4 binds ubiquitinated proteins and is necessary for the export of misfolded proteins from the ER to the cytoplasm, where they are degraded by the proteasome. The NPLOC4-UFD1-VCP complex regulates spindle disassembly at the end of mitosis and is necessary for the formation of a closed nuclear envelope. It may be involved in the development of some ectoderm-derived structures. Acts as a negative regulator of type I interferon production via the complex formed with VCP and NPLOC4, which binds to RIGI and recruits RNF125 to promote ubiquitination and degradation of RIGI. The sequence is that of Ubiquitin recognition factor in ER-associated degradation protein 1 from Rattus norvegicus (Rat).